Consider the following 151-residue polypeptide: tRNA-specific adenosine deaminase (151 aa).

One can recognise a CMP/dCMP-type deaminase domain in the interval 4-122 (NRDSYWMKIA…PFLKKIFINL (119 aa)). A Zn(2+)-binding site is contributed by histidine 55. The Proton donor role is filled by glutamate 57. Residues cysteine 85 and cysteine 88 each coordinate Zn(2+).

The protein belongs to the cytidine and deoxycytidylate deaminase family. In terms of assembly, homodimer. Zn(2+) serves as cofactor.

It carries out the reaction adenosine(34) in tRNA + H2O + H(+) = inosine(34) in tRNA + NH4(+). Catalyzes the deamination of adenosine to inosine at the wobble position 34 of tRNA(Arg2). The polypeptide is tRNA-specific adenosine deaminase (Buchnera aphidicola subsp. Schizaphis graminum (strain Sg)).